We begin with the raw amino-acid sequence, 229 residues long: Uracil-DNA glycosylase (229 aa).

The active-site Proton acceptor is the Asp-64.

It belongs to the uracil-DNA glycosylase (UDG) superfamily. UNG family.

The protein localises to the cytoplasm. The catalysed reaction is Hydrolyzes single-stranded DNA or mismatched double-stranded DNA and polynucleotides, releasing free uracil.. Excises uracil residues from the DNA which can arise as a result of misincorporation of dUMP residues by DNA polymerase or due to deamination of cytosine. The polypeptide is Uracil-DNA glycosylase (Geobacillus kaustophilus (strain HTA426)).